The sequence spans 140 residues: Flagellar assembly factor FliW (140 aa).

This sequence belongs to the FliW family. As to quaternary structure, interacts with translational regulator CsrA and flagellin(s).

It localises to the cytoplasm. Its function is as follows. Acts as an anti-CsrA protein, binds CsrA and prevents it from repressing translation of its target genes, one of which is flagellin. Binds to flagellin and participates in the assembly of the flagellum. The protein is Flagellar assembly factor FliW of Syntrophotalea carbinolica (strain DSM 2380 / NBRC 103641 / GraBd1) (Pelobacter carbinolicus).